We begin with the raw amino-acid sequence, 334 residues long: Iron-uptake system permease protein FeuB (334 aa).

Transmembrane regions (helical) follow at residues 9-29 (IILI…ILYG), 63-83 (AAGA…MQGI), 91-111 (PSIM…MVLL), 119-139 (MMIY…GLAA), 150-170 (LAII…AMSI), 191-211 (PDFL…AISL), 243-263 (VIIL…VGLV), 281-301 (PCSC…SRFI), and 305-325 (FETP…LYLI).

Belongs to the binding-protein-dependent transport system permease family. FecCD subfamily. In terms of assembly, the complex is composed of one ATP-binding protein (YusV), two transmembrane proteins (FeuB and FeuC) and a solute-binding protein (FeuA).

Its subcellular location is the cell membrane. The protein localises to the membrane raft. Involved in the uptake of iron. Probably responsible for the translocation of the substrate across the membrane. Functionally, part of the ABC transporter complex FeuABC/YusV involved in import of the catecholate siderophores bacillibactin and enterobactin. This chain is Iron-uptake system permease protein FeuB (feuB), found in Bacillus subtilis (strain 168).